Consider the following 626-residue polypeptide: Receptor-like protein 4 (626 aa).

The signal sequence occupies residues 1-22; the sequence is MMLRFILASLLLSSFSLYSSLA. The Extracellular segment spans residues 23 to 549; the sequence is RPAPYALRIS…CGPHLSSGAK (527 aa). 4 N-linked (GlcNAc...) asparagine glycosylation sites follow: N61, N282, N333, and N417. LRR repeat units follow at residues 420 to 444, 445 to 468, 470 to 492, and 493 to 516; these read RWFIDGLDLDNQGLKGFLPNDISKL, KHLQSINLSENNIRGGIPASLGSV, SLEVLDLSYNSFNGSIPETLGEL, and TSLRILNLNGNSLSGKVPAAVGGR. N451 and N482 each carry an N-linked (GlcNAc...) asparagine glycan. The N-linked (GlcNAc...) asparagine glycan is linked to N524. The chain crosses the membrane as a helical span at residues 550 to 570; sequence IGIAFGVSLAFLLIVACAMIW. The Cytoplasmic portion of the chain corresponds to 571–626; sequence WKRRQNILRAQQIAARGAPYAKKRTHVSHDIQMSRHGHNNHGQARTAVENGPSLLS. Residues 603-626 form a disordered region; sequence MSRHGHNNHGQARTAVENGPSLLS.

Belongs to the RLP family.

It is found in the cell membrane. The sequence is that of Receptor-like protein 4 from Arabidopsis thaliana (Mouse-ear cress).